The chain runs to 189 residues: Cytidylate kinase (189 aa).

7–15 (GPPGSGKTS) is an ATP binding site.

This sequence belongs to the cytidylate kinase family. Type 2 subfamily.

It is found in the cytoplasm. It carries out the reaction CMP + ATP = CDP + ADP. It catalyses the reaction dCMP + ATP = dCDP + ADP. This chain is Cytidylate kinase, found in Saccharolobus islandicus (strain Y.N.15.51 / Yellowstone #2) (Sulfolobus islandicus).